Here is a 340-residue protein sequence, read N- to C-terminus: uncharacterized protein (340 aa).

A helical transmembrane segment spans residues 6–26 (ITFGLLVLMVCVILFVLYVQL).

The protein resides in the cell membrane. This is an uncharacterized protein from Bacillus subtilis (strain 168).